The following is a 62-amino-acid chain: Small, acid-soluble spore protein H 1 (62 aa).

Belongs to the SspH family.

It is found in the spore core. The polypeptide is Small, acid-soluble spore protein H 1 (Clostridium botulinum (strain ATCC 19397 / Type A)).